The sequence spans 78 residues: UPF0270 protein YE3952 (78 aa).

This sequence belongs to the UPF0270 family.

This is UPF0270 protein YE3952 from Yersinia enterocolitica serotype O:8 / biotype 1B (strain NCTC 13174 / 8081).